We begin with the raw amino-acid sequence, 552 residues long: Phosphoglucomutase (552 aa).

Ser-143 (phosphoserine intermediate) is an active-site residue. Mg(2+)-binding residues include Ser-143, Asp-295, Asp-297, and Asp-299.

The protein belongs to the phosphohexose mutase family. The cofactor is Mg(2+).

It catalyses the reaction alpha-D-glucose 1-phosphate = alpha-D-glucose 6-phosphate. The protein operates within glycolipid metabolism; diglucosyl-diacylglycerol biosynthesis. Functionally, catalyzes the interconversion between glucose-6-phosphate and alpha-glucose-1-phosphate. This is the first step in the biosynthesis of diglucosyl-diacylglycerol (Glc2-DAG), i.e. the predominant glycolipid found in the S.aureus membrane, which is also used as a membrane anchor for lipoteichoic acid (LTA). The protein is Phosphoglucomutase (pgcA) of Staphylococcus aureus (strain Mu50 / ATCC 700699).